Reading from the N-terminus, the 147-residue chain is Epididymal secretory protein E3-alpha (147 aa).

A signal peptide spans 1–25 (MTSSLKIWGILLALLCILCRLCVYS).

As to expression, epididymis, with predominant expression in the corpus region. Moderately expressed in the vas deferens; only low levels are detectable in the caput and cauda regions.

It is found in the secreted. In terms of biological role, possible function in sperm maturation. This chain is Epididymal secretory protein E3-alpha (EDDM3A), found in Homo sapiens (Human).